The chain runs to 162 residues: Interleukin-15 (162 aa).

The first 29 residues, 1–29 (MRISKPHLRSISIQCYLCLLLKSHFLTEA), serve as a signal peptide directing secretion. Positions 30 to 48 (GIHVFILGCFSAGLPKTEA) are excised as a propeptide. Intrachain disulfides connect cysteine 83-cysteine 133 and cysteine 90-cysteine 136. Residue asparagine 127 is glycosylated (N-linked (GlcNAc...) asparagine).

This sequence belongs to the IL-15/IL-21 family.

The protein resides in the secreted. Cytokine that plays a major role in the development of inflammatory and protective immune responses to microbial invaders and parasites by modulating immune cells of both the innate and adaptive immune systems. Stimulates the proliferation of natural killer cells, T-cells and B-cells and promotes the secretion of several cytokines. In monocytes, induces the production of IL8 and monocyte chemotactic protein 1/CCL2, two chemokines that attract neutrophils and monocytes respectively to sites of infection. Unlike most cytokines, which are secreted in soluble form, IL15 is expressed in association with its high affinity IL15RA on the surface of IL15-producing cells and delivers signals to target cells that express IL2RB and IL2RG receptor subunits. Binding to its receptor triggers the phosphorylation of JAK1 and JAK3 and the recruitment and subsequent phosphorylation of signal transducer and activator of transcription-3/STAT3 and STAT5. In mast cells, induces the rapid tyrosine phosphorylation of STAT6 and thereby controls mast cell survival and release of cytokines such as IL4. This chain is Interleukin-15 (IL15), found in Chlorocebus aethiops (Green monkey).